Here is a 466-residue protein sequence, read N- to C-terminus: 3-isopropylmalate dehydratase large subunit (466 aa).

C347, C407, and C410 together coordinate [4Fe-4S] cluster.

This sequence belongs to the aconitase/IPM isomerase family. LeuC type 1 subfamily. As to quaternary structure, heterodimer of LeuC and LeuD. It depends on [4Fe-4S] cluster as a cofactor.

The catalysed reaction is (2R,3S)-3-isopropylmalate = (2S)-2-isopropylmalate. It functions in the pathway amino-acid biosynthesis; L-leucine biosynthesis; L-leucine from 3-methyl-2-oxobutanoate: step 2/4. Catalyzes the isomerization between 2-isopropylmalate and 3-isopropylmalate, via the formation of 2-isopropylmaleate. This is 3-isopropylmalate dehydratase large subunit from Shewanella piezotolerans (strain WP3 / JCM 13877).